A 145-amino-acid chain; its full sequence is Protein X (145 aa).

A mitochondrial targeting sequence region spans residues 68–117; that stretch reads PCALRFTSARRMETTVNAHQVLPKVLHKRTLGLSAMSTTDLEAYFKDCVF.

The protein belongs to the orthohepadnavirus protein X family. As to quaternary structure, may form homodimer. May interact with host CEBPA, CFLAR, CREB1, DDB1, E4F1, HBXIP, HSPD1/HSP60, NFKBIA, POLR2E and SMAD4. Interacts with host SMC5-SMC6 complex and induces its degradation. Interacts with host TRPC4AP; leading to prevent ubiquitination of TRPC4AP. Interacts with host PLSCR1; this interaction promotes ubiquitination and degradation of HBx and impairs HBx-mediated cell proliferation. Post-translationally, a fraction may be phosphorylated in insect cells and HepG2 cells, a human hepatoblastoma cell line. Phosphorylated in vitro by host protein kinase C or mitogen-activated protein kinase. N-acetylated in insect cells.

The protein resides in the host cytoplasm. Its subcellular location is the host nucleus. The protein localises to the host mitochondrion. In terms of biological role, multifunctional protein that plays a role in silencing host antiviral defenses and promoting viral transcription. Does not seem to be essential for HBV infection. May be directly involved in development of cirrhosis and liver cancer (hepatocellular carcinoma). Most of cytosolic activities involve modulation of cytosolic calcium. The effect on apoptosis is controversial depending on the cell types in which the studies have been conducted. May induce apoptosis by localizing in mitochondria and causing loss of mitochondrial membrane potential. May also modulate apoptosis by binding host CFLAR, a key regulator of the death-inducing signaling complex (DISC). Promotes viral transcription by using the host E3 ubiquitin ligase DDB1 to target the SMC5-SMC6 complex to proteasomal degradation. This host complex would otherwise bind to viral episomal DNA, and prevents its transcription. Moderately stimulates transcription of many different viral and cellular transcription elements. Promoters and enhancers stimulated by HBx contain DNA binding sites for NF-kappa-B, AP-1, AP-2, c-EBP, ATF/CREB, or the calcium-activated factor NF-AT. The sequence is that of Protein X from Homo sapiens (Human).